The sequence spans 173 residues: Phosphopantetheine adenylyltransferase (173 aa).

S9 is a binding site for substrate. Residues 9-10 (SF) and H17 contribute to the ATP site. Substrate-binding residues include K41, T73, and R87. ATP is bound by residues 88–90 (GLR), E98, and 123–129 (YQHLSSS).

The protein belongs to the bacterial CoaD family. As to quaternary structure, homohexamer. Requires Mg(2+) as cofactor.

The protein resides in the cytoplasm. The catalysed reaction is (R)-4'-phosphopantetheine + ATP + H(+) = 3'-dephospho-CoA + diphosphate. The protein operates within cofactor biosynthesis; coenzyme A biosynthesis; CoA from (R)-pantothenate: step 4/5. Reversibly transfers an adenylyl group from ATP to 4'-phosphopantetheine, yielding dephospho-CoA (dPCoA) and pyrophosphate. In Limosilactobacillus reuteri (strain DSM 20016) (Lactobacillus reuteri), this protein is Phosphopantetheine adenylyltransferase.